The sequence spans 151 residues: Ribosome maturation factor RimP (151 aa).

This sequence belongs to the RimP family.

The protein localises to the cytoplasm. Required for maturation of 30S ribosomal subunits. This Vibrio vulnificus (strain CMCP6) protein is Ribosome maturation factor RimP.